The following is a 39-amino-acid chain: Photosystem II reaction center protein J (39 aa).

A helical transmembrane segment spans residues 9–29; it reads LWLVVTFGGIVVLTVLGIFIY.

It belongs to the PsbJ family. PSII is composed of 1 copy each of membrane proteins PsbA, PsbB, PsbC, PsbD, PsbE, PsbF, PsbH, PsbI, PsbJ, PsbK, PsbL, PsbM, PsbT, PsbY, PsbZ, Psb30/Ycf12, at least 3 peripheral proteins of the oxygen-evolving complex and a large number of cofactors. It forms dimeric complexes.

The protein localises to the plastid. Its subcellular location is the chloroplast thylakoid membrane. Functionally, one of the components of the core complex of photosystem II (PSII). PSII is a light-driven water:plastoquinone oxidoreductase that uses light energy to abstract electrons from H(2)O, generating O(2) and a proton gradient subsequently used for ATP formation. It consists of a core antenna complex that captures photons, and an electron transfer chain that converts photonic excitation into a charge separation. The chain is Photosystem II reaction center protein J from Cyanidium caldarium (Red alga).